The primary structure comprises 346 residues: Tetraacyldisaccharide 4'-kinase (346 aa).

54 to 61 lines the ATP pocket; the sequence is TVGGAGKT.

Belongs to the LpxK family.

It catalyses the reaction a lipid A disaccharide + ATP = a lipid IVA + ADP + H(+). The protein operates within glycolipid biosynthesis; lipid IV(A) biosynthesis; lipid IV(A) from (3R)-3-hydroxytetradecanoyl-[acyl-carrier-protein] and UDP-N-acetyl-alpha-D-glucosamine: step 6/6. Functionally, transfers the gamma-phosphate of ATP to the 4'-position of a tetraacyldisaccharide 1-phosphate intermediate (termed DS-1-P) to form tetraacyldisaccharide 1,4'-bis-phosphate (lipid IVA). The polypeptide is Tetraacyldisaccharide 4'-kinase (Sinorhizobium medicae (strain WSM419) (Ensifer medicae)).